The primary structure comprises 189 residues: MAGKQPPPLMKKHSQTDLVSRLKTRKILGVGGEDDDGEVHRSKISQVLGNEIKFAVREPLGLRVWQFLSAMLFSSVAIMALALPDQLYDAVFDGAEVTSKTPIRLYGGALLSISLIMWNALYTAEKVIIRWTLLTEACYFGVQSLVVTATLAETGLMSLGTVLLLASRLLFVIVSIYYYYQVGRKPKKV.

Topologically, residues 1–63 (MAGKQPPPLM…FAVREPLGLR (63 aa)) are cytoplasmic. The residue at position 14 (S14) is a Phosphoserine. The helical transmembrane segment at 64 to 84 (VWQFLSAMLFSSVAIMALALP) threads the bilayer. The Extracellular segment spans residues 85–108 (DQLYDAVFDGAEVTSKTPIRLYGG). A helical transmembrane segment spans residues 109–129 (ALLSISLIMWNALYTAEKVII). A topological domain (cytoplasmic) is located at residue R130. Residues 131–151 (WTLLTEACYFGVQSLVVTATL) traverse the membrane as a helical segment. The Extracellular segment spans residues 152 to 155 (AETG). A helical membrane pass occupies residues 156–176 (LMSLGTVLLLASRLLFVIVSI). Over 177 to 189 (YYYYQVGRKPKKV) the chain is Cytoplasmic.

The protein resides in the membrane. In Mus musculus (Mouse), this protein is Tumor protein p53-inducible protein 11 (Trp53i11).